A 133-amino-acid polypeptide reads, in one-letter code: ATP synthase epsilon chain, chloroplastic (133 aa).

The protein belongs to the ATPase epsilon chain family. As to quaternary structure, F-type ATPases have 2 components, CF(1) - the catalytic core - and CF(0) - the membrane proton channel. CF(1) has five subunits: alpha(3), beta(3), gamma(1), delta(1), epsilon(1). CF(0) has three main subunits: a, b and c.

It localises to the plastid. The protein resides in the chloroplast thylakoid membrane. Produces ATP from ADP in the presence of a proton gradient across the membrane. The polypeptide is ATP synthase epsilon chain, chloroplastic (Lactuca sativa (Garden lettuce)).